Reading from the N-terminus, the 252-residue chain is Neurexophilin-3 (252 aa).

A signal peptide spans 1 to 22 (MQLTRCCFVFLVQGSLYLVICG). The II stretch occupies residues 23-75 (QEDGPPGSEDPEHDDHEGQPRPRVPRKRGHISPKSRPLANSTLLGLLAPPGEV). A disordered region spans residues 27-59 (PPGSEDPEHDDHEGQPRPRVPRKRGHISPKSRP). The segment covering 45 to 55 (RVPRKRGHISP) has biased composition (basic residues). 4 N-linked (GlcNAc...) asparagine glycosylation sites follow: asparagine 62, asparagine 127, asparagine 137, and asparagine 143. Residues 76-157 (WGILGQPPNR…LVPPSKAVEF (82 aa)) form an III region. An IV (linker domain) region spans residues 158–166 (HQEQQIFIE). The tract at residues 167-252 (AKASKIFNCR…HSDTPYYPSG (86 aa)) is v (Cys-rich).

It belongs to the neurexophilin family. In terms of processing, may be proteolytically processed at the boundary between the N-terminal non-conserved and the central conserved domain in neuron-like cells. As to expression, brain. Detected in several other tissues.

It localises to the secreted. In terms of biological role, may be signaling molecules that resemble neuropeptides. Ligand for alpha-neurexins. The sequence is that of Neurexophilin-3 (Nxph3) from Rattus norvegicus (Rat).